The chain runs to 417 residues: Gamma-glutamyl phosphate reductase (417 aa).

This sequence belongs to the gamma-glutamyl phosphate reductase family.

It is found in the cytoplasm. It catalyses the reaction L-glutamate 5-semialdehyde + phosphate + NADP(+) = L-glutamyl 5-phosphate + NADPH + H(+). Its pathway is amino-acid biosynthesis; L-proline biosynthesis; L-glutamate 5-semialdehyde from L-glutamate: step 2/2. In terms of biological role, catalyzes the NADPH-dependent reduction of L-glutamate 5-phosphate into L-glutamate 5-semialdehyde and phosphate. The product spontaneously undergoes cyclization to form 1-pyrroline-5-carboxylate. The protein is Gamma-glutamyl phosphate reductase of Escherichia coli O45:K1 (strain S88 / ExPEC).